Reading from the N-terminus, the 199-residue chain is Chorismate pyruvate-lyase (199 aa).

Belongs to the chorismate pyruvate-lyase type 2 family.

It carries out the reaction chorismate = 4-hydroxybenzoate + pyruvate. In terms of biological role, removes the pyruvyl group from chorismate to provide 4-hydroxybenzoate (4HB). Involved in the synthesis of glycosylated p-hydroxybenzoic acid methyl esters (p-HBADs) and phenolic glycolipids (PGL) that play important roles in the pathogenesis of mycobacterial infections. This chain is Chorismate pyruvate-lyase, found in Mycobacterium bovis (strain ATCC BAA-935 / AF2122/97).